We begin with the raw amino-acid sequence, 171 residues long: N5-carboxyaminoimidazole ribonucleotide mutase (171 aa).

Residues Ser13, Asp16, and Arg43 each coordinate substrate.

It belongs to the AIR carboxylase family. Class I subfamily.

The enzyme catalyses 5-carboxyamino-1-(5-phospho-D-ribosyl)imidazole + H(+) = 5-amino-1-(5-phospho-D-ribosyl)imidazole-4-carboxylate. The protein operates within purine metabolism; IMP biosynthesis via de novo pathway; 5-amino-1-(5-phospho-D-ribosyl)imidazole-4-carboxylate from 5-amino-1-(5-phospho-D-ribosyl)imidazole (N5-CAIR route): step 2/2. Functionally, catalyzes the conversion of N5-carboxyaminoimidazole ribonucleotide (N5-CAIR) to 4-carboxy-5-aminoimidazole ribonucleotide (CAIR). The protein is N5-carboxyaminoimidazole ribonucleotide mutase of Mycobacterium leprae (strain TN).